Consider the following 581-residue polypeptide: Ezrin (581 aa).

Residues 2 to 295 (PKPINVRVTT…GNHELYMRRR (294 aa)) enclose the FERM domain. The residue at position 60 (Lys-60) is an N6-acetyllysine. The [IL]-x-C-x-x-[DE] motif signature appears at 115–120 (IYCPPE). A Phosphotyrosine; by PDGFR modification is found at Tyr-146. Positions 244 to 581 (EIRNISFNDK…KQRIDEFEAM (338 aa)) are interaction with SCYL3. A coiled-coil region spans residues 302-462 (VQQMKAQARE…QDDLVKTREE (161 aa)). Residues 306-341 (KAQAREEKHQKQLERQQLETEKKRRETVEREKEQMM) form a disordered region. Over residues 308 to 341 (QAREEKHQKQLERQQLETEKKRRETVEREKEQMM) the composition is skewed to basic and acidic residues. Tyr-354 bears the Phosphotyrosine; by PDGFR mark. Ser-366 is subject to Phosphoserine. Position 476 is a phosphotyrosine (Tyr-476). Positions 534-560 (SQARDENKRTHNDIIHNENMRQGRDKY) are disordered. Residues 535 to 560 (QARDENKRTHNDIIHNENMRQGRDKY) show a composition bias toward basic and acidic residues. At Thr-562 the chain carries Phosphothreonine; by ROCK2 and PKC/PRKCI.

In terms of assembly, interacts with PALS1 and NHERF2. Found in a complex with EZR, PODXL and NHERF2. Interacts with MCC, PLEKHG6, PODXL, SCYL3/PACE1, NHERF1 and TMEM8B. Interacts (when phosphorylated) with FES/FPS. Interacts with dimeric S100P, the interaction may be activating through unmasking of F-actin binding sites. Identified in complexes that contain VIM, EZR, AHNAK, BFSP1, BFSP2, ANK2, PLEC, PRX and spectrin. Detected in a complex composed of at least EZR, AHNAK, PPL and PRX. Interacts with PDPN (via cytoplasmic domain); activates RHOA and promotes epithelial-mesenchymal transition. Interacts with SPN/CD43 cytoplasmic tail, CD44 and ICAM2. Interacts with SLC9A3; interaction targets SLC9A3 to the apical membrane. Interacts with SLC9A1; regulates interactions of SLC9A1 with cytoskeletal and promotes stress fiber formation. Interacts with CLIC5; may work together in a complex which also includes RDX and MYO6 to stabilize linkages between the plasma membrane and subjacent actin cytoskeleton at the base of stereocilia. Phosphorylated by tyrosine-protein kinases. Phosphorylation by ROCK2 suppresses the head-to-tail association of the N-terminal and C-terminal halves resulting in an opened conformation which is capable of actin and membrane-binding. In terms of processing, S-nitrosylation is induced by interferon-gamma and oxidatively-modified low-densitity lipoprotein (LDL(ox)) possibly implicating the iNOS-S100A8/9 transnitrosylase complex. Detected in eye lens fiber cells (at protein level).

It localises to the apical cell membrane. It is found in the cell projection. The protein resides in the microvillus membrane. Its subcellular location is the ruffle membrane. The protein localises to the cytoplasm. It localises to the cell cortex. It is found in the cytoskeleton. The protein resides in the microvillus. A head-to-tail association, of the N-terminal and C-terminal halves results in a closed conformation (inactive form) which is incapable of actin or membrane-binding. Functionally, probably involved in connections of major cytoskeletal structures to the plasma membrane. In epithelial cells, required for the formation of microvilli and membrane ruffles on the apical pole. Along with PLEKHG6, required for normal macropinocytosis. In Bos taurus (Bovine), this protein is Ezrin (EZR).